We begin with the raw amino-acid sequence, 206 residues long: Tumor protein D54 (206 aa).

Position 1 is an N-acetylmethionine (methionine 1). Over residues 1–14 (MDSAGQDINLNSPN) the composition is skewed to polar residues. Residues 1-24 (MDSAGQDINLNSPNKGLLSDSMTD) are disordered. Phosphoserine occurs at positions 3, 12, 19, and 21. The stretch at 38 to 82 (VEGLTEAEEEELRAELTKVEEEIVTLRQVLAAKERHCGELKRRLG) forms a coiled coil. Phosphoserine is present on residues serine 96, serine 149, and serine 161. Phosphothreonine is present on threonine 163. Position 166 is a phosphoserine (serine 166). Phosphothreonine is present on threonine 173. A compositionally biased stretch (basic and acidic residues) spans 175–185 (KSKVVGDRENG). The segment at 175–206 (KSKVVGDRENGSDSLPSSAGSGDKPLSDPAPF) is disordered. Residues serine 192 and serine 195 each carry the phosphoserine modification.

Belongs to the TPD52 family. In terms of assembly, forms a homodimer or heterodimer with other members of the family. Interacts with MAL2.

The chain is Tumor protein D54 (TPD52L2) from Pongo abelii (Sumatran orangutan).